We begin with the raw amino-acid sequence, 310 residues long: UDP-N-acetylenolpyruvoylglucosamine reductase (310 aa).

An FAD-binding PCMH-type domain is found at 35–203 (RAGGAAEALV…TRVRFALRKG (169 aa)). Residue Arg183 is part of the active site. Residue Ser232 is the Proton donor of the active site. Glu302 is a catalytic residue.

The protein belongs to the MurB family. FAD is required as a cofactor.

It is found in the cytoplasm. It catalyses the reaction UDP-N-acetyl-alpha-D-muramate + NADP(+) = UDP-N-acetyl-3-O-(1-carboxyvinyl)-alpha-D-glucosamine + NADPH + H(+). The protein operates within cell wall biogenesis; peptidoglycan biosynthesis. In terms of biological role, cell wall formation. The chain is UDP-N-acetylenolpyruvoylglucosamine reductase from Myxococcus xanthus (strain DK1622).